We begin with the raw amino-acid sequence, 106 residues long: Putative protein LRRC37A5P (106 aa).

The sequence is that of Putative protein LRRC37A5P (LRRC37A5P) from Homo sapiens (Human).